Reading from the N-terminus, the 139-residue chain is Nucleoside diphosphate kinase (139 aa).

Lysine 9, phenylalanine 57, arginine 85, threonine 91, arginine 102, and asparagine 112 together coordinate ATP. The Pros-phosphohistidine intermediate role is filled by histidine 115.

The protein belongs to the NDK family. Homotetramer. Requires Mg(2+) as cofactor.

The protein localises to the cytoplasm. The enzyme catalyses a 2'-deoxyribonucleoside 5'-diphosphate + ATP = a 2'-deoxyribonucleoside 5'-triphosphate + ADP. It carries out the reaction a ribonucleoside 5'-diphosphate + ATP = a ribonucleoside 5'-triphosphate + ADP. Its function is as follows. Major role in the synthesis of nucleoside triphosphates other than ATP. The ATP gamma phosphate is transferred to the NDP beta phosphate via a ping-pong mechanism, using a phosphorylated active-site intermediate. In Desulfosudis oleivorans (strain DSM 6200 / JCM 39069 / Hxd3) (Desulfococcus oleovorans), this protein is Nucleoside diphosphate kinase.